Consider the following 348-residue polypeptide: Fructose-1,6-bisphosphatase (348 aa).

A Pro/N-degron motif is present at residues 2–5 (PTLV). Residue S12 is modified to Phosphoserine. AMP-binding positions include 27–31 (IIEHQ) and 38–42 (TGDFT). Positions 79 and 108 each coordinate Mg(2+). AMP is bound at residue 122 to 123 (SY). Mg(2+)-binding residues include D128, I130, and D131. 131 to 134 (DGSS) is a binding site for substrate. An AMP-binding site is contributed by R150. Residues 222–225 (NEGN), 255–260 (RYVGSM), Y276, and 286–288 (KLR) each bind substrate. Residue E292 coordinates Mg(2+).

The protein belongs to the FBPase class 1 family. Homotetramer. The cofactor is Mg(2+). In terms of processing, ubiquitinated. Targeted for proteasomal degradation when cells are shifted to glucose-containing growth medium.

The enzyme catalyses beta-D-fructose 1,6-bisphosphate + H2O = beta-D-fructose 6-phosphate + phosphate. The protein operates within carbohydrate biosynthesis; gluconeogenesis. With respect to regulation, subject to complex allosteric regulation. The enzyme can assume an active R-state, or an inactive T-state. Intermediate conformations may exist. AMP acts as allosteric inhibitor. AMP binding affects the turnover of bound substrate and not the affinity for substrate. The polypeptide is Fructose-1,6-bisphosphatase (FBP1) (Saccharomyces cerevisiae (strain ATCC 204508 / S288c) (Baker's yeast)).